The sequence spans 213 residues: ATP phosphoribosyltransferase (213 aa).

It belongs to the ATP phosphoribosyltransferase family. Short subfamily. Heteromultimer composed of HisG and HisZ subunits.

It is found in the cytoplasm. It carries out the reaction 1-(5-phospho-beta-D-ribosyl)-ATP + diphosphate = 5-phospho-alpha-D-ribose 1-diphosphate + ATP. Its pathway is amino-acid biosynthesis; L-histidine biosynthesis; L-histidine from 5-phospho-alpha-D-ribose 1-diphosphate: step 1/9. Functionally, catalyzes the condensation of ATP and 5-phosphoribose 1-diphosphate to form N'-(5'-phosphoribosyl)-ATP (PR-ATP). Has a crucial role in the pathway because the rate of histidine biosynthesis seems to be controlled primarily by regulation of HisG enzymatic activity. This Bacillus licheniformis (strain ATCC 14580 / DSM 13 / JCM 2505 / CCUG 7422 / NBRC 12200 / NCIMB 9375 / NCTC 10341 / NRRL NRS-1264 / Gibson 46) protein is ATP phosphoribosyltransferase.